A 500-amino-acid chain; its full sequence is L-aspartate semialdehyde sulfurtransferase (500 aa).

The active-site Cysteine persulfide intermediate is Cys131. CBS domains lie at 384–441 (MADF…IFDS) and 446–500 (MTKK…ARRY).

Belongs to the L-aspartate semialdehyde sulfurtransferase family. In terms of assembly, forms homodimers. May form a complex with MA_1822.

The enzyme catalyses L-aspartate 4-semialdehyde + reduced 2[4Fe-4S]-[ferredoxin] + hydrogen sulfide + 3 H(+) = oxidized 2[4Fe-4S]-[ferredoxin] + L-homocysteine + H2O. It functions in the pathway amino-acid biosynthesis. Required for O-acetylhomoserine sulfhydrylase (OAHS)-independent homocysteine (Hcy) biosynthesis. Together with MA_1822, catalyzes the condensation of sulfide with aspartate semialdehyde to generate homocysteine. Likely functions through persulfide intermediate. The polypeptide is L-aspartate semialdehyde sulfurtransferase (Methanosarcina acetivorans (strain ATCC 35395 / DSM 2834 / JCM 12185 / C2A)).